The primary structure comprises 67 residues: DNA-directed RNA polymerase subunit omega (67 aa).

It belongs to the RNA polymerase subunit omega family. In terms of assembly, the RNAP catalytic core consists of 2 alpha, 1 beta, 1 beta' and 1 omega subunit. When a sigma factor is associated with the core the holoenzyme is formed, which can initiate transcription.

It catalyses the reaction RNA(n) + a ribonucleoside 5'-triphosphate = RNA(n+1) + diphosphate. In terms of biological role, promotes RNA polymerase assembly. Latches the N- and C-terminal regions of the beta' subunit thereby facilitating its interaction with the beta and alpha subunits. This chain is DNA-directed RNA polymerase subunit omega, found in Burkholderia multivorans (strain ATCC 17616 / 249).